We begin with the raw amino-acid sequence, 56 residues long: Large ribosomal subunit protein eL20 (56 aa).

Residues 1 to 24 (MSTYTVRGSFPARDGPQQFEKEVE) form a disordered region.

The protein belongs to the eukaryotic ribosomal protein eL20 family. In terms of assembly, part of the 50S ribosomal subunit. Binds 23S rRNA.

The protein is Large ribosomal subunit protein eL20 of Haloarcula marismortui (strain ATCC 43049 / DSM 3752 / JCM 8966 / VKM B-1809) (Halobacterium marismortui).